The following is a 310-amino-acid chain: Porphobilinogen deaminase (310 aa).

At C242 the chain carries S-(dipyrrolylmethanemethyl)cysteine.

Belongs to the HMBS family. In terms of assembly, monomer. Dipyrromethane is required as a cofactor.

The enzyme catalyses 4 porphobilinogen + H2O = hydroxymethylbilane + 4 NH4(+). It participates in porphyrin-containing compound metabolism; protoporphyrin-IX biosynthesis; coproporphyrinogen-III from 5-aminolevulinate: step 2/4. Functionally, tetrapolymerization of the monopyrrole PBG into the hydroxymethylbilane pre-uroporphyrinogen in several discrete steps. The chain is Porphobilinogen deaminase from Psychromonas ingrahamii (strain DSM 17664 / CCUG 51855 / 37).